The chain runs to 207 residues: Octanoyltransferase (207 aa).

Residues 29–204 (DDTADELWLV…ELMVQLGDEE (176 aa)) enclose the BPL/LPL catalytic domain. Substrate-binding positions include 68–75 (RGGQVTYH), 135–137 (SLG), and 148–150 (GVA). Cys-166 acts as the Acyl-thioester intermediate in catalysis.

Belongs to the LipB family.

It localises to the cytoplasm. The enzyme catalyses octanoyl-[ACP] + L-lysyl-[protein] = N(6)-octanoyl-L-lysyl-[protein] + holo-[ACP] + H(+). Its pathway is protein modification; protein lipoylation via endogenous pathway; protein N(6)-(lipoyl)lysine from octanoyl-[acyl-carrier-protein]: step 1/2. Functionally, catalyzes the transfer of endogenously produced octanoic acid from octanoyl-acyl-carrier-protein onto the lipoyl domains of lipoate-dependent enzymes. Lipoyl-ACP can also act as a substrate although octanoyl-ACP is likely to be the physiological substrate. The sequence is that of Octanoyltransferase from Methylococcus capsulatus (strain ATCC 33009 / NCIMB 11132 / Bath).